The following is a 151-amino-acid chain: Deoxyuridine 5'-triphosphate nucleotidohydrolase (151 aa).

Substrate contacts are provided by residues 70–72 (RSG), asparagine 83, 87–89 (LID), and methionine 97.

The protein belongs to the dUTPase family. It depends on Mg(2+) as a cofactor.

It carries out the reaction dUTP + H2O = dUMP + diphosphate + H(+). The protein operates within pyrimidine metabolism; dUMP biosynthesis; dUMP from dCTP (dUTP route): step 2/2. This enzyme is involved in nucleotide metabolism: it produces dUMP, the immediate precursor of thymidine nucleotides and it decreases the intracellular concentration of dUTP so that uracil cannot be incorporated into DNA. The polypeptide is Deoxyuridine 5'-triphosphate nucleotidohydrolase (Pseudomonas fluorescens (strain SBW25)).